A 108-amino-acid polypeptide reads, in one-letter code: Small ribosomal subunit protein uS10 (108 aa).

This sequence belongs to the universal ribosomal protein uS10 family. As to quaternary structure, part of the 30S ribosomal subunit.

Its function is as follows. Involved in the binding of tRNA to the ribosomes. The polypeptide is Small ribosomal subunit protein uS10 (Ehrlichia canis (strain Jake)).